The chain runs to 491 residues: 2,3-bisphosphoglycerate-independent phosphoglycerate mutase (491 aa).

2 residues coordinate Mn(2+): D11 and S61. The active-site Phosphoserine intermediate is the S61. Residues H118, 147–148, R177, R183, 248–251, and K320 contribute to the substrate site; these read RD and RSDR. Mn(2+) is bound by residues D386, H390, D427, H428, and H445.

Belongs to the BPG-independent phosphoglycerate mutase family. Monomer. It depends on Mn(2+) as a cofactor.

It carries out the reaction (2R)-2-phosphoglycerate = (2R)-3-phosphoglycerate. Its pathway is carbohydrate degradation; glycolysis; pyruvate from D-glyceraldehyde 3-phosphate: step 3/5. In terms of biological role, catalyzes the interconversion of 2-phosphoglycerate and 3-phosphoglycerate. The protein is 2,3-bisphosphoglycerate-independent phosphoglycerate mutase of Sulfurimonas denitrificans (strain ATCC 33889 / DSM 1251) (Thiomicrospira denitrificans (strain ATCC 33889 / DSM 1251)).